The following is a 299-amino-acid chain: GTPase Era (299 aa).

Residues 5–172 (KSGFVSIIGR…IDVLKSFLPE (168 aa)) enclose the Era-type G domain. A G1 region spans residues 13–20 (GRPNVGKS). 13-20 (GRPNVGKS) is a GTP binding site. A G2 region spans residues 39–43 (QTTRN). A G3 region spans residues 60-63 (DTPG). Residues 60 to 64 (DTPGI) and 122 to 125 (NKID) each bind GTP. Residues 122 to 125 (NKID) are G4. The segment at 151-153 (ISA) is G5. The region spanning 203–280 (TSEEIPHAIG…YLELWVKVQR (78 aa)) is the KH type-2 domain.

Belongs to the TRAFAC class TrmE-Era-EngA-EngB-Septin-like GTPase superfamily. Era GTPase family. In terms of assembly, monomer.

It localises to the cytoplasm. The protein localises to the cell membrane. An essential GTPase that binds both GDP and GTP, with rapid nucleotide exchange. Plays a role in 16S rRNA processing and 30S ribosomal subunit biogenesis and possibly also in cell cycle regulation and energy metabolism. The polypeptide is GTPase Era (Staphylococcus epidermidis (strain ATCC 35984 / DSM 28319 / BCRC 17069 / CCUG 31568 / BM 3577 / RP62A)).